A 612-amino-acid polypeptide reads, in one-letter code: UvrABC system protein C (612 aa).

In terms of domain architecture, GIY-YIG spans 18–96; sequence TRPGVYRMMD…IKTLKPPYNI (79 aa). The 36-residue stretch at 208 to 243 folds into the UVR domain; that stretch reads PEIINETIQQMEVASAQLDFERAAVLRDQVDYLRRV.

The protein belongs to the UvrC family. Interacts with UvrB in an incision complex.

The protein resides in the cytoplasm. Its function is as follows. The UvrABC repair system catalyzes the recognition and processing of DNA lesions. UvrC both incises the 5' and 3' sides of the lesion. The N-terminal half is responsible for the 3' incision and the C-terminal half is responsible for the 5' incision. In Hahella chejuensis (strain KCTC 2396), this protein is UvrABC system protein C.